A 119-amino-acid chain; its full sequence is Putative ankyrin repeat domain-containing protein 26-like 1 (119 aa).

Residues 15–112 adopt a coiled-coil conformation; it reads EKEEDLLHKN…EKQSRQRLTK (98 aa).

This is Putative ankyrin repeat domain-containing protein 26-like 1 (ANKRD36BP1) from Homo sapiens (Human).